The sequence spans 317 residues: Acetyl-coenzyme A carboxylase carboxyl transferase subunit alpha (317 aa).

Residues 33–294 form the CoA carboxyltransferase C-terminal domain; the sequence is NINKEINCLR…KNRILKDLKE (262 aa).

This sequence belongs to the AccA family. Acetyl-CoA carboxylase is a heterohexamer composed of biotin carboxyl carrier protein (AccB), biotin carboxylase (AccC) and two subunits each of ACCase subunit alpha (AccA) and ACCase subunit beta (AccD).

Its subcellular location is the cytoplasm. It catalyses the reaction N(6)-carboxybiotinyl-L-lysyl-[protein] + acetyl-CoA = N(6)-biotinyl-L-lysyl-[protein] + malonyl-CoA. It participates in lipid metabolism; malonyl-CoA biosynthesis; malonyl-CoA from acetyl-CoA: step 1/1. Component of the acetyl coenzyme A carboxylase (ACC) complex. First, biotin carboxylase catalyzes the carboxylation of biotin on its carrier protein (BCCP) and then the CO(2) group is transferred by the carboxyltransferase to acetyl-CoA to form malonyl-CoA. The polypeptide is Acetyl-coenzyme A carboxylase carboxyl transferase subunit alpha (Wigglesworthia glossinidia brevipalpis).